The following is a 331-amino-acid chain: D-alanine--D-alanine ligase (331 aa).

In terms of domain architecture, ATP-grasp spans 122-328 (KLWYDAIGIP…FHEFLADCIE (207 aa)). Residue 152 to 207 (AFDKWGKLFVKAARQGSSVGCYSVTKIEQLSDAIDKAFGFSHQVLVEKAVKPRELE) participates in ATP binding. Asp-282, Glu-295, and Asn-297 together coordinate Mg(2+).

This sequence belongs to the D-alanine--D-alanine ligase family. The cofactor is Mg(2+). Requires Mn(2+) as cofactor.

It is found in the cytoplasm. The catalysed reaction is 2 D-alanine + ATP = D-alanyl-D-alanine + ADP + phosphate + H(+). It functions in the pathway cell wall biogenesis; peptidoglycan biosynthesis. Cell wall formation. The sequence is that of D-alanine--D-alanine ligase from Vibrio vulnificus (strain CMCP6).